Reading from the N-terminus, the 230-residue chain is Protein CWC15 homolog B (230 aa).

Residues 1 to 126 (MTTAARPTFE…DEDSDDDTAA (126 aa)) are disordered. Residues 22–34 (DLSQLSKQYSSRD) are compositionally biased toward polar residues. Residues 52 to 84 (EEVRSRDFRRELEERERVAVRDKNRDRPTREHT) show a composition bias toward basic and acidic residues. Residues 102–124 (DADDPLTDEDADEDSDEDSDDDT) show a composition bias toward acidic residues. A coiled-coil region spans residues 121–165 (DDDTAALLAELEKIKKERAEEQVRKELEQKAEEERIRMENILSGN).

This sequence belongs to the CWC15 family. In terms of assembly, identified in the spliceosome C complex. Component of the minor spliceosome, which splices U12-type introns.

Its subcellular location is the nucleus. Its function is as follows. Involved in pre-mRNA splicing as component of the spliceosome. In Xenopus laevis (African clawed frog), this protein is Protein CWC15 homolog B (cwc15-b).